We begin with the raw amino-acid sequence, 325 residues long: Glycerol-3-phosphate dehydrogenase [NAD(P)+] (325 aa).

3 residues coordinate NADPH: Trp15, Arg35, and Lys107. The sn-glycerol 3-phosphate site is built by Lys107, Gly135, and Ser137. Ala139 contacts NADPH. 5 residues coordinate sn-glycerol 3-phosphate: Lys190, Asp243, Ser253, Arg254, and Asn255. The active-site Proton acceptor is Lys190. Arg254 serves as a coordination point for NADPH. NADPH is bound by residues Leu272 and Glu274.

The protein belongs to the NAD-dependent glycerol-3-phosphate dehydrogenase family.

Its subcellular location is the cytoplasm. The catalysed reaction is sn-glycerol 3-phosphate + NAD(+) = dihydroxyacetone phosphate + NADH + H(+). It carries out the reaction sn-glycerol 3-phosphate + NADP(+) = dihydroxyacetone phosphate + NADPH + H(+). The protein operates within membrane lipid metabolism; glycerophospholipid metabolism. Catalyzes the reduction of the glycolytic intermediate dihydroxyacetone phosphate (DHAP) to sn-glycerol 3-phosphate (G3P), the key precursor for phospholipid synthesis. The chain is Glycerol-3-phosphate dehydrogenase [NAD(P)+] from Afipia carboxidovorans (strain ATCC 49405 / DSM 1227 / KCTC 32145 / OM5) (Oligotropha carboxidovorans).